A 194-amino-acid chain; its full sequence is Small ribosomal subunit protein uS4c (194 aa).

The disordered stretch occupies residues 1–29; it reads RFKKIRRLGTLPGLTSKRPRSGSDLKNPL. Residues 82 to 143 form the S4 RNA-binding domain; sequence MRLDNILFRL…KQRSKALIQN (62 aa).

The protein belongs to the universal ribosomal protein uS4 family. In terms of assembly, part of the 30S ribosomal subunit. Contacts protein S5. The interaction surface between S4 and S5 is involved in control of translational fidelity.

It is found in the plastid. Its subcellular location is the chloroplast. One of the primary rRNA binding proteins, it binds directly to 16S rRNA where it nucleates assembly of the body of the 30S subunit. In terms of biological role, with S5 and S12 plays an important role in translational accuracy. This chain is Small ribosomal subunit protein uS4c (rps4), found in Furcraea foetida (Mauritius hemp).